We begin with the raw amino-acid sequence, 186 residues long: Peptidyl-tRNA hydrolase (186 aa).

Tyrosine 17 contacts tRNA. Histidine 22 functions as the Proton acceptor in the catalytic mechanism. 2 residues coordinate tRNA: tyrosine 64 and asparagine 66.

It belongs to the PTH family. As to quaternary structure, monomer.

It is found in the cytoplasm. The enzyme catalyses an N-acyl-L-alpha-aminoacyl-tRNA + H2O = an N-acyl-L-amino acid + a tRNA + H(+). In terms of biological role, hydrolyzes ribosome-free peptidyl-tRNAs (with 1 or more amino acids incorporated), which drop off the ribosome during protein synthesis, or as a result of ribosome stalling. Functionally, catalyzes the release of premature peptidyl moieties from peptidyl-tRNA molecules trapped in stalled 50S ribosomal subunits, and thus maintains levels of free tRNAs and 50S ribosomes. The polypeptide is Peptidyl-tRNA hydrolase (Methylacidiphilum infernorum (isolate V4) (Methylokorus infernorum (strain V4))).